Consider the following 432-residue polypeptide: Adenylosuccinate synthetase (432 aa).

GTP is bound by residues 13–19 and 41–43; these read GDEGKGK and GHT. The active-site Proton acceptor is aspartate 14. Mg(2+) is bound by residues aspartate 14 and glycine 41. IMP contacts are provided by residues 14-17, 39-42, threonine 130, arginine 144, glutamine 225, threonine 240, and arginine 304; these read DEGK and NAGH. Histidine 42 serves as the catalytic Proton donor. 300–306 contacts substrate; it reads STTGRRR. Residues arginine 306, 332–334, and 415–417 contribute to the GTP site; these read KID and STG.

The protein belongs to the adenylosuccinate synthetase family. As to quaternary structure, homodimer. Mg(2+) is required as a cofactor.

It is found in the cytoplasm. The enzyme catalyses IMP + L-aspartate + GTP = N(6)-(1,2-dicarboxyethyl)-AMP + GDP + phosphate + 2 H(+). The protein operates within purine metabolism; AMP biosynthesis via de novo pathway; AMP from IMP: step 1/2. Functionally, plays an important role in the de novo pathway of purine nucleotide biosynthesis. Catalyzes the first committed step in the biosynthesis of AMP from IMP. This Blochmanniella pennsylvanica (strain BPEN) protein is Adenylosuccinate synthetase.